The primary structure comprises 699 residues: Polyribonucleotide nucleotidyltransferase (699 aa).

2 residues coordinate Mg(2+): D485 and D491. The 60-residue stretch at 552 to 611 (PRITTIKINPEKIRDVIGKGGAVIRALTEETGTTIELEDDGTVKIASSNGEATKEAIRRI) folds into the KH domain. The region spanning 621-689 (GRIYNGKVIR…RQGRVRLSIK (69 aa)) is the S1 motif domain.

Belongs to the polyribonucleotide nucleotidyltransferase family. Component of the RNA degradosome, which is a multiprotein complex involved in RNA processing and mRNA degradation. Mg(2+) serves as cofactor.

The protein resides in the cytoplasm. It carries out the reaction RNA(n+1) + phosphate = RNA(n) + a ribonucleoside 5'-diphosphate. Its function is as follows. Involved in mRNA degradation. Catalyzes the phosphorolysis of single-stranded polyribonucleotides processively in the 3'- to 5'-direction. This Shewanella sp. (strain MR-4) protein is Polyribonucleotide nucleotidyltransferase.